Here is a 121-residue protein sequence, read N- to C-terminus: Large ribosomal subunit protein uL14 (121 aa).

This sequence belongs to the universal ribosomal protein uL14 family. In terms of assembly, part of the 50S ribosomal subunit. Forms a cluster with proteins L3 and L19. In the 70S ribosome, L14 and L19 interact and together make contacts with the 16S rRNA in bridges B5 and B8.

Its function is as follows. Binds to 23S rRNA. Forms part of two intersubunit bridges in the 70S ribosome. In Synechococcus sp. (strain CC9605), this protein is Large ribosomal subunit protein uL14.